Consider the following 570-residue polypeptide: Urease subunit alpha (570 aa).

One can recognise a Urease domain in the interval 131–570; it reads GGFDSHIHFI…LPMAQRYFMY (440 aa). Residues His-136, His-138, and Lys-219 each coordinate Ni(2+). Residue Lys-219 is modified to N6-carboxylysine. His-221 serves as a coordination point for substrate. The Ni(2+) site is built by His-248 and His-274. Residue His-322 is the Proton donor of the active site. Asp-362 contributes to the Ni(2+) binding site.

It belongs to the metallo-dependent hydrolases superfamily. Urease alpha subunit family. In terms of assembly, heterotrimer of UreA (gamma), UreB (beta) and UreC (alpha) subunits. Three heterotrimers associate to form the active enzyme. Requires Ni cation as cofactor. Post-translationally, carboxylation allows a single lysine to coordinate two nickel ions.

It is found in the cytoplasm. It catalyses the reaction urea + 2 H2O + H(+) = hydrogencarbonate + 2 NH4(+). It participates in nitrogen metabolism; urea degradation; CO(2) and NH(3) from urea (urease route): step 1/1. This chain is Urease subunit alpha, found in Rhodopseudomonas palustris (strain BisB18).